The sequence spans 309 residues: Probable ABC transporter permease protein YqgH (309 aa).

Transmembrane regions (helical) follow at residues 30 to 50 (MIVT…TIFL), 88 to 108 (FIFG…PLGI), 133 to 153 (LVGI…VPFI), 165 to 185 (LLAG…SISA), 214 to 234 (LVPA…ARAF), and 280 to 300 (NTLW…ILLI). Residues 89 to 300 (IFGSFAVTIL…VMSFLFILLI (212 aa)) enclose the ABC transmembrane type-1 domain.

The protein belongs to the binding-protein-dependent transport system permease family. CysTW subfamily.

It localises to the cell membrane. Its function is as follows. Part of the binding-protein-dependent transport system YqgGHIJK. Probably responsible for the translocation of the substrate across the membrane. The polypeptide is Probable ABC transporter permease protein YqgH (yqgH) (Bacillus subtilis (strain 168)).